A 587-amino-acid chain; its full sequence is Glutathione hydrolase proenzyme (587 aa).

A signal peptide spans 1–28 (MKRTWNVCLTALLSVLLVAGSVPFHAEA). A propeptide spanning residues 29–35 (KKPPKSY) is cleaved from the precursor. An L-glutamate-binding site is contributed by R113. Catalysis depends on T403, which acts as the Nucleophile. Residues T421, E423, E442, D445, 464–465 (SS), and 485–486 (GG) each bind L-glutamate.

Belongs to the gamma-glutamyltransferase family. This enzyme consists of two polypeptide chains, which are synthesized in precursor form from a single polypeptide. Post-translationally, cleaved by autocatalysis into a large and a small subunit.

The protein resides in the secreted. The catalysed reaction is an N-terminal (5-L-glutamyl)-[peptide] + an alpha-amino acid = 5-L-glutamyl amino acid + an N-terminal L-alpha-aminoacyl-[peptide]. It catalyses the reaction glutathione + H2O = L-cysteinylglycine + L-glutamate. It carries out the reaction an S-substituted glutathione + H2O = an S-substituted L-cysteinylglycine + L-glutamate. It functions in the pathway sulfur metabolism; glutathione metabolism. In terms of biological role, cleaves the gamma-glutamyl bond of extracellular glutathione (gamma-Glu-Cys-Gly), glutathione conjugates, and other gamma-glutamyl compounds. The metabolism of glutathione releases free glutamate and the dipeptide cysteinyl-glycine, which is hydrolyzed to cysteine and glycine by dipeptidases. This chain is Glutathione hydrolase proenzyme (ggt), found in Bacillus subtilis (strain 168).